The primary structure comprises 261 residues: UPF0177 protein YvdC (261 aa).

Transmembrane regions (helical) follow at residues 15–35, 43–63, 84–104, 123–143, 197–217, and 239–259; these read WVIVIILALLFSALSVSIFHL, VLSIVGLIFAYHKSVWLVLFI, LDTVIFFIIFLLTIISSYLIA, IIIGFALLFLVSILTGIFAQI, YFAFLTALLLFAYMHGPTDLY, and FYLNMSVHLLWNLFGLVIALV.

Belongs to the UPF0177 family.

It localises to the cell membrane. The protein is UPF0177 protein YvdC (yvdC) of Lactococcus lactis subsp. lactis (strain IL1403) (Streptococcus lactis).